The sequence spans 126 residues: Glycine cleavage system H protein (126 aa).

One can recognise a Lipoyl-binding domain in the interval 24-105; that stretch reads TLTVGITDHA…AYGVWLFKIK (82 aa). N6-lipoyllysine is present on Lys-65.

It belongs to the GcvH family. As to quaternary structure, the glycine cleavage system is composed of four proteins: P, T, L and H. (R)-lipoate is required as a cofactor.

In terms of biological role, the glycine cleavage system catalyzes the degradation of glycine. The H protein shuttles the methylamine group of glycine from the P protein to the T protein. The polypeptide is Glycine cleavage system H protein (Burkholderia ambifaria (strain MC40-6)).